Here is a 516-residue protein sequence, read N- to C-terminus: Pickpocket protein 11 (516 aa).

2 helical membrane passes run Ile-117–Ser-137 and Phe-454–Phe-474.

This sequence belongs to the amiloride-sensitive sodium channel (TC 1.A.6) family. As to expression, expressed in embryonic and larval tracheal systems in the dorsal trunk and transverse connective (TC), but not in the junction between the dorsal trunk and TC, and in several tracheal branches and terminal cells. In larvae, also expressed in ventral pits. Expressed in the taste-sensing terminal organ of the larval head. In adult, expressed in hairs on the tibia, femur, tarsi of the leg and wing margin.

The protein localises to the membrane. Part of a complex that plays a role in tracheal liquid clearance. In both larvae and adults, contributes to the behavioral response to salt. Probable role in sodium transport. The chain is Pickpocket protein 11 (ppk11) from Drosophila melanogaster (Fruit fly).